We begin with the raw amino-acid sequence, 149 residues long: Alpha-crystallin A chain (149 aa).

Residues 41-149 (LFRSVLESGI…DPTHSERPIP (109 aa)) form the sHSP domain. Zn(2+) is bound by residues His-89, Glu-91, His-96, and His-143.

This sequence belongs to the small heat shock protein (HSP20) family. In terms of assembly, heteropolymer composed of three CRYAA and one CRYAB subunits. Inter-subunit bridging via zinc ions enhances stability, which is crucial as there is no protein turn over in the lens. Can also form homodimers and homotetramers (dimers of dimers) which serve as the building blocks of homooligomers. Within homooligomers, the zinc-binding motif is created from residues of 3 different molecules. His-89 and Glu-91 from one molecule are ligands of the zinc ion, and His-96 and His-143 residues from additional molecules complete the site with tetrahedral coordination geometry.

Its subcellular location is the cytoplasm. The protein resides in the nucleus. Its function is as follows. Contributes to the transparency and refractive index of the lens. May act as a chaperone, preventing aggregation of various proteins under a wide range of stress conditions. The chain is Alpha-crystallin A chain (CRYAA) from Anas platyrhynchos (Mallard).